A 298-amino-acid chain; its full sequence is Phospholipase A1 (298 aa).

Residues C4 and C87 are joined by a disulfide bond. N88 and N122 each carry an N-linked (GlcNAc...) asparagine glycan. The active-site Nucleophile is the S134. D162 acts as the Charge relay system in catalysis. Cystine bridges form between C173–C178 and C216–C225. H227 (charge relay system) is an active-site residue. Cystine bridges form between C242/C266, C243/C291, and C259/C264.

Belongs to the AB hydrolase superfamily. Lipase family. In terms of tissue distribution, expressed by the venom gland.

The protein resides in the secreted. It catalyses the reaction a 1,2-diacyl-sn-glycero-3-phosphocholine + H2O = a 2-acyl-sn-glycero-3-phosphocholine + a fatty acid + H(+). Functionally, catalyzes the hydrolysis of phosphatidylcholine with phospholipase A1 activity. May act as an allergen and induce hemolytic activity. The sequence is that of Phospholipase A1 from Vespula squamosa (Southern yellow jacket).